We begin with the raw amino-acid sequence, 460 residues long: tRNA modification GTPase MnmE (460 aa).

Residues arginine 29, glutamate 91, and lysine 132 each contribute to the (6S)-5-formyl-5,6,7,8-tetrahydrofolate site. In terms of domain architecture, TrmE-type G spans 227–383; it reads GISIALIGKT…LIDTIIKKCG (157 aa). Asparagine 237 is a binding site for K(+). Residues 237–242, 256–262, and 281–284 each bind GTP; these read NVGKSS, TNIPGTT, and DTAG. Serine 241 is a binding site for Mg(2+). The K(+) site is built by threonine 256, isoleucine 258, and threonine 261. A Mg(2+)-binding site is contributed by threonine 262. Lysine 460 serves as a coordination point for (6S)-5-formyl-5,6,7,8-tetrahydrofolate.

It belongs to the TRAFAC class TrmE-Era-EngA-EngB-Septin-like GTPase superfamily. TrmE GTPase family. In terms of assembly, homodimer. Heterotetramer of two MnmE and two MnmG subunits. Requires K(+) as cofactor.

It is found in the cytoplasm. Its function is as follows. Exhibits a very high intrinsic GTPase hydrolysis rate. Involved in the addition of a carboxymethylaminomethyl (cmnm) group at the wobble position (U34) of certain tRNAs, forming tRNA-cmnm(5)s(2)U34. The chain is tRNA modification GTPase MnmE from Prochlorococcus marinus (strain MIT 9301).